The sequence spans 287 residues: Phosphatidylglycerol--prolipoprotein diacylglyceryl transferase (287 aa).

4 helical membrane-spanning segments follow: residues 15–35, 55–75, 90–110, and 117–137; these read IGPL…ILAI, FVMF…VFFE, IWEG…TAIV, and VSFW…QAIG. An a 1,2-diacyl-sn-glycero-3-phospho-(1'-sn-glycerol)-binding site is contributed by Arg138. A run of 2 helical transmembrane segments spans residues 180–200 and 238–258; these read HPTF…LLLL and IIRT…IFII.

Belongs to the Lgt family.

Its subcellular location is the cell membrane. The catalysed reaction is L-cysteinyl-[prolipoprotein] + a 1,2-diacyl-sn-glycero-3-phospho-(1'-sn-glycerol) = an S-1,2-diacyl-sn-glyceryl-L-cysteinyl-[prolipoprotein] + sn-glycerol 1-phosphate + H(+). Its pathway is protein modification; lipoprotein biosynthesis (diacylglyceryl transfer). Functionally, catalyzes the transfer of the diacylglyceryl group from phosphatidylglycerol to the sulfhydryl group of the N-terminal cysteine of a prolipoprotein, the first step in the formation of mature lipoproteins. The protein is Phosphatidylglycerol--prolipoprotein diacylglyceryl transferase of Oceanobacillus iheyensis (strain DSM 14371 / CIP 107618 / JCM 11309 / KCTC 3954 / HTE831).